Reading from the N-terminus, the 462-residue chain is Glutamate--tRNA ligase (462 aa).

A 'HIGH' region motif is present at residues Pro-11 to Asn-21. Over residues Lys-120 to Pro-131 the composition is skewed to basic and acidic residues. Residues Lys-120 to Ala-140 are disordered. A 'KMSKS' region motif is present at residues Lys-243–Arg-247. Residue Lys-246 coordinates ATP.

This sequence belongs to the class-I aminoacyl-tRNA synthetase family. Glutamate--tRNA ligase type 1 subfamily. Monomer.

The protein localises to the cytoplasm. It carries out the reaction tRNA(Glu) + L-glutamate + ATP = L-glutamyl-tRNA(Glu) + AMP + diphosphate. Its function is as follows. Catalyzes the attachment of glutamate to tRNA(Glu) in a two-step reaction: glutamate is first activated by ATP to form Glu-AMP and then transferred to the acceptor end of tRNA(Glu). The chain is Glutamate--tRNA ligase from Polaromonas sp. (strain JS666 / ATCC BAA-500).